The primary structure comprises 420 residues: Nucleoporin NUP42 (420 aa).

The segment at 1–25 adopts a C3H1-type zinc-finger fold; the sequence is MTICQFFLQGRCRFGDRCWNEHPGA. One copy of the FG 1 repeat lies at 14 to 15; the sequence is FG. The interval 25 to 111 is disordered; that stretch reads ARGAGGARQP…FASPLSDEQK (87 aa). A compositionally biased stretch (polar residues) spans 42–67; that stretch reads SGNNRRGWNASSQRYSNVIQPSSFPK. FG repeat units follow at residues 82-83, 95-96, 218-219, 220-221, 228-229, 265-266, 271-272, 288-289, 345-346, and 364-365; these read FG. Polar residues predominate over residues 87 to 102; the sequence is SGASTSRGFGSSQNPF. The tract at residues 323–345 is disordered; sequence MAASPSGSTTAPPLRSGSSVVGF. Residues 365–420 are interaction with GLE1; that stretch reads GGSGISTSVLASGAADNALFTPRDQLMKEELEQFQSQRFTLGKIPLKPPPVELLTV.

Probable component of the nuclear pore complex (NPC). Interacts with nuclear export protein NXF1. Interacts with GLE1. Able to form a heterotrimer with NUP155 and GLE1 in vitro. Interacts with XPO1. Post-translationally, O-glycosylated.

The protein localises to the nucleus. The protein resides in the nuclear pore complex. It localises to the nucleus membrane. Functionally, required for the export of mRNAs containing poly(A) tails from the nucleus into the cytoplasm. The protein is Nucleoporin NUP42 (Nup42) of Mus musculus (Mouse).